A 669-amino-acid chain; its full sequence is DNA ligase (669 aa).

Residues 34 to 38 (DAEYD), 83 to 84 (SL), and Glu-114 each bind NAD(+). The active-site N6-AMP-lysine intermediate is the Lys-116. NAD(+) is bound by residues Arg-137, Glu-171, Lys-287, and Lys-311. Positions 405, 408, 423, and 428 each coordinate Zn(2+). The 79-residue stretch at 591-669 (NVESYFAGKT…EERFLQELNK (79 aa)) folds into the BRCT domain.

It belongs to the NAD-dependent DNA ligase family. LigA subfamily. Requires Mg(2+) as cofactor. It depends on Mn(2+) as a cofactor.

It catalyses the reaction NAD(+) + (deoxyribonucleotide)n-3'-hydroxyl + 5'-phospho-(deoxyribonucleotide)m = (deoxyribonucleotide)n+m + AMP + beta-nicotinamide D-nucleotide.. DNA ligase that catalyzes the formation of phosphodiester linkages between 5'-phosphoryl and 3'-hydroxyl groups in double-stranded DNA using NAD as a coenzyme and as the energy source for the reaction. It is essential for DNA replication and repair of damaged DNA. In Bacillus mycoides (strain KBAB4) (Bacillus weihenstephanensis), this protein is DNA ligase.